The chain runs to 615 residues: Dihydroxy-acid dehydratase (615 aa).

Aspartate 81 contributes to the Mg(2+) binding site. Cysteine 122 serves as a coordination point for [2Fe-2S] cluster. Residues aspartate 123 and lysine 124 each contribute to the Mg(2+) site. At lysine 124 the chain carries N6-carboxylysine. Cysteine 195 serves as a coordination point for [2Fe-2S] cluster. Glutamate 491 is a binding site for Mg(2+). Residue serine 517 is the Proton acceptor of the active site.

Belongs to the IlvD/Edd family. As to quaternary structure, homodimer. The cofactor is [2Fe-2S] cluster. Mg(2+) is required as a cofactor.

The catalysed reaction is (2R)-2,3-dihydroxy-3-methylbutanoate = 3-methyl-2-oxobutanoate + H2O. It catalyses the reaction (2R,3R)-2,3-dihydroxy-3-methylpentanoate = (S)-3-methyl-2-oxopentanoate + H2O. The protein operates within amino-acid biosynthesis; L-isoleucine biosynthesis; L-isoleucine from 2-oxobutanoate: step 3/4. It functions in the pathway amino-acid biosynthesis; L-valine biosynthesis; L-valine from pyruvate: step 3/4. Functions in the biosynthesis of branched-chain amino acids. Catalyzes the dehydration of (2R,3R)-2,3-dihydroxy-3-methylpentanoate (2,3-dihydroxy-3-methylvalerate) into 2-oxo-3-methylpentanoate (2-oxo-3-methylvalerate) and of (2R)-2,3-dihydroxy-3-methylbutanoate (2,3-dihydroxyisovalerate) into 2-oxo-3-methylbutanoate (2-oxoisovalerate), the penultimate precursor to L-isoleucine and L-valine, respectively. The chain is Dihydroxy-acid dehydratase from Novosphingobium aromaticivorans (strain ATCC 700278 / DSM 12444 / CCUG 56034 / CIP 105152 / NBRC 16084 / F199).